Consider the following 169-residue polypeptide: Nicotinamide-nucleotide adenylyltransferase (169 aa).

This sequence belongs to the archaeal NMN adenylyltransferase family.

The protein localises to the cytoplasm. The enzyme catalyses beta-nicotinamide D-ribonucleotide + ATP + H(+) = diphosphate + NAD(+). Its pathway is cofactor biosynthesis; NAD(+) biosynthesis; NAD(+) from nicotinamide D-ribonucleotide: step 1/1. This chain is Nicotinamide-nucleotide adenylyltransferase, found in Picrophilus torridus (strain ATCC 700027 / DSM 9790 / JCM 10055 / NBRC 100828 / KAW 2/3).